The chain runs to 153 residues: Insulin-like growth factor 1 (153 aa).

The interval 49–77 (GPETLCGAELVDALQFVCGDRGFYFNKPT) is b. Disulfide bonds link C54-C96, C66-C109, and C95-C100. The segment at 78–89 (GYGSSSRRAPQT) is c. The a stretch occupies residues 90 to 110 (GIVDECCFRSCDLRRLEMYCA). The interval 111–118 (PLKPAKSA) is d. A propeptide spans 119-153 (RSVRAQRHTDMPKAQKEVHLKNASRGSAGNKNYRM) (e peptide). Positions 120–153 (SVRAQRHTDMPKAQKEVHLKNASRGSAGNKNYRM) are disordered. Over residues 125 to 138 (RHTDMPKAQKEVHL) the composition is skewed to basic and acidic residues. Residues 142–153 (SRGSAGNKNYRM) show a composition bias toward polar residues.

Belongs to the insulin family. As to quaternary structure, forms a ternary complex with IGFR1 and ITGAV:ITGB3. Forms a ternary complex with IGFR1 and ITGA6:ITGB4. Forms a ternary complex with IGFBP3 and ALS.

The protein localises to the secreted. Its function is as follows. The insulin-like growth factors, isolated from plasma, are structurally and functionally related to insulin but have a much higher growth-promoting activity. May be a physiological regulator of [1-14C]-2-deoxy-D-glucose (2DG) transport and glycogen synthesis in osteoblasts. Stimulates glucose transport in bone-derived osteoblastic (PyMS) cells and is effective at much lower concentrations than insulin, not only regarding glycogen and DNA synthesis but also with regard to enhancing glucose uptake. May play a role in synapse maturation. Ca(2+)-dependent exocytosis of IGF1 is required for sensory perception of smell in the olfactory bulb. Acts as a ligand for IGF1R. Binds to the alpha subunit of IGF1R, leading to the activation of the intrinsic tyrosine kinase activity which autophosphorylates tyrosine residues in the beta subunit thus initiating a cascade of down-stream signaling events leading to activation of the PI3K-AKT/PKB and the Ras-MAPK pathways. Binds to integrins ITGAV:ITGB3 and ITGA6:ITGB4. Its binding to integrins and subsequent ternary complex formation with integrins and IGFR1 are essential for IGF1 signaling. Induces the phosphorylation and activation of IGFR1, MAPK3/ERK1, MAPK1/ERK2 and AKT1. As part of the MAPK/ERK signaling pathway, acts as a negative regulator of apoptosis in cardiomyocytes via promotion of STUB1/CHIP-mediated ubiquitination and degradation of ICER-type isoforms of CREM. The polypeptide is Insulin-like growth factor 1 (Ailuropoda melanoleuca (Giant panda)).